Reading from the N-terminus, the 214-residue chain is Charged multivesicular body protein 2b-A (214 aa).

The stretch at 25–55 (QRAITRDRTALEKQEKQLEMEIKKMAKAGNK) forms a coiled coil. Positions 178-214 (MAKAPSAAKGLPSASASKSTGISDEEIERQLKALGVD) are disordered. Positions 202–212 (EEIERQLKALG) match the MIT-interacting motif motif.

This sequence belongs to the SNF7 family. Probable core component of the endosomal sorting required for transport complex III (ESCRT-III). ESCRT-III components are thought to multimerize to form a flat lattice on the perimeter membrane of the endosome.

It localises to the cytoplasm. The protein localises to the cytosol. Its subcellular location is the late endosome membrane. In terms of biological role, probable core component of the endosomal sorting required for transport complex III (ESCRT-III) which is involved in multivesicular bodies (MVBs) formation and sorting of endosomal cargo proteins into MVBs. MVBs contain intraluminal vesicles (ILVs) that are generated by invagination and scission from the limiting membrane of the endosome and mostly are delivered to lysosomes enabling degradation of membrane proteins, such as stimulated growth factor receptors, lysosomal enzymes and lipids. The protein is Charged multivesicular body protein 2b-A (chmp2b-a) of Xenopus laevis (African clawed frog).